A 73-amino-acid chain; its full sequence is uncharacterized protein (73 aa).

The N-terminal stretch at 1–21 (MTLFSSLSSLSTGSLKSSVSS) is a signal peptide. Low complexity predominate over residues 1–38 (MTLFSSLSSLSTGSLKSSVSSIETGSSSGSFGSNETSG). Residues 1-43 (MTLFSSLSSLSTGSLKSSVSSIETGSSSGSFGSNETSGWGSHH) form a disordered region. N-linked (GlcNAc...) asparagine glycosylation occurs at N34.

The protein localises to the secreted. This is an uncharacterized protein from Dictyostelium discoideum (Social amoeba).